We begin with the raw amino-acid sequence, 95 residues long: UPF0358 protein BcerKBAB4_3775 (95 aa).

Belongs to the UPF0358 family.

This chain is UPF0358 protein BcerKBAB4_3775, found in Bacillus mycoides (strain KBAB4) (Bacillus weihenstephanensis).